A 596-amino-acid polypeptide reads, in one-letter code: MVNLLSANREALIAQSICATVLKGNWKNILKHKVDSGLLKSAITTQVISELSLFSGYGGPSLSWSFFIWTDSLPSSKHSLQSSWKMILILTKHKHFKTAHQLLDKLAQRELLSSPLVLRSLVGGVSEDPEDVSHVFSWLMIYYAKAGMINDSIVVFEQIRSCGLKPHLQACTVLLNSLVKQRLTDTVWKIFKKMVKLGVVANIHVYNVLVHACSKSGDPEKAEKLLSEMEEKGVFPDIFTYNTLISVYCKKSMHFEALSVQDRMERSGVAPNIVTYNSFIHGFSREGRMREATRLFREIKDDVTANHVTYTTLIDGYCRMNDIDEALRLREVMESRGFSPGVVTYNSILRKLCEDGRIREANRLLTEMSGKKIEPDNITCNTLINAYCKIEDMVSAVKVKKKMIESGLKLDMYSYKALIHGFCKVLELENAKEELFSMIEKGFSPGYATYSWLVDGFYNQNKQDEITKLLEEFEKRGLCADVALYRGLIRRICKLEQVDYAKVLFESMEKKGLVGDSVIFTTMAYAYWRTGKVTEASALFDVMYNRRLMVNLKLYKSISASYAGDNDVLRFFWSHVGDRCLISKSILREMNRSEVL.

PPR repeat units follow at residues 132–166 (VSHVFSWLMIYYAKAGMINDSIVVFEQIRSCGLKP), 167–201 (HLQACTVLLNSLVKQRLTDTVWKIFKKMVKLGVVA), 202–236 (NIHVYNVLVHACSKSGDPEKAEKLLSEMEEKGVFP), 237–271 (DIFTYNTLISVYCKKSMHFEALSVQDRMERSGVAP), 272–302 (NIVTYNSFIHGFSREGRMREATRLFREIKDD), 306–340 (NHVTYTTLIDGYCRMNDIDEALRLREVMESRGFSP), 341–375 (GVVTYNSILRKLCEDGRIREANRLLTEMSGKKIEP), 376–410 (DNITCNTLINAYCKIEDMVSAVKVKKKMIESGLKL), 411–445 (DMYSYKALIHGFCKVLELENAKEELFSMIEKGFSP), 446–480 (GYATYSWLVDGFYNQNKQDEITKLLEEFEKRGLCA), 481–515 (DVALYRGLIRRICKLEQVDYAKVLFESMEKKGLVG), and 516–550 (DSVIFTTMAYAYWRTGKVTEASALFDVMYNRRLMV).

Belongs to the PPR family. P subfamily.

The polypeptide is Pentatricopeptide repeat-containing protein At5g38730 (Arabidopsis thaliana (Mouse-ear cress)).